We begin with the raw amino-acid sequence, 306 residues long: MKKKIAVLLGGNSSERKISIKSGYAILQSLLRSGFNAYAIDTRDFPIMQLKKQGFDSAYIALHGTGGEDGSIQGILEYLNIPYTGSGIMSSAISLDKWRTKLLWKSLSLRVLPDIYLQKKDISKYTYSYILKKILKLKFPVVIKPNNAGSSIGITIVNHPDLLIDSINLAFNYSNNIIIEKFLKGTEYTVSILNKKVLPPIKIITKNNFYDYSSKYIESSTEYICPSGLNYQKEEELKKIVEIAWNSLGCKGCGRIDAILDNKDKFWLLEINTIPGMTHRSLVPMAAKSIGISFDELILKILKINK.

Catalysis depends on residues glutamate 15 and serine 150. The ATP-grasp domain maps to 101–303 (KLLWKSLSLR…FDELILKILK (203 aa)). Residue 134-189 (ILKLKFPVVIKPNNAGSSIGITIVNHPDLLIDSINLAFNYSNNIIIEKFLKGTEYT) participates in ATP binding. Aspartate 257, glutamate 270, and asparagine 272 together coordinate Mg(2+). Residue serine 281 is part of the active site.

It belongs to the D-alanine--D-alanine ligase family. Mg(2+) is required as a cofactor. Mn(2+) serves as cofactor.

The protein resides in the cytoplasm. The catalysed reaction is 2 D-alanine + ATP = D-alanyl-D-alanine + ADP + phosphate + H(+). It functions in the pathway cell wall biogenesis; peptidoglycan biosynthesis. Its function is as follows. Cell wall formation. This Buchnera aphidicola subsp. Schizaphis graminum (strain Sg) protein is D-alanine--D-alanine ligase.